The chain runs to 372 residues: Lipoyl synthase (372 aa).

Residues Cys-37, Cys-42, Cys-48, Cys-63, Cys-67, Cys-70, and Ser-292 each contribute to the [4Fe-4S] cluster site. Residues 49–281 (WREGTATVML…ERAALEMGFL (233 aa)) form the Radical SAM core domain. The tract at residues 338 to 372 (LTAELDPDEPRPPVAPAPASASPARLVPAASLIRR) is disordered. Low complexity predominate over residues 354–372 (APASASPARLVPAASLIRR).

Belongs to the radical SAM superfamily. Lipoyl synthase family. The cofactor is [4Fe-4S] cluster.

It localises to the cytoplasm. The enzyme catalyses [[Fe-S] cluster scaffold protein carrying a second [4Fe-4S](2+) cluster] + N(6)-octanoyl-L-lysyl-[protein] + 2 oxidized [2Fe-2S]-[ferredoxin] + 2 S-adenosyl-L-methionine + 4 H(+) = [[Fe-S] cluster scaffold protein] + N(6)-[(R)-dihydrolipoyl]-L-lysyl-[protein] + 4 Fe(3+) + 2 hydrogen sulfide + 2 5'-deoxyadenosine + 2 L-methionine + 2 reduced [2Fe-2S]-[ferredoxin]. It participates in protein modification; protein lipoylation via endogenous pathway; protein N(6)-(lipoyl)lysine from octanoyl-[acyl-carrier-protein]: step 2/2. Functionally, catalyzes the radical-mediated insertion of two sulfur atoms into the C-6 and C-8 positions of the octanoyl moiety bound to the lipoyl domains of lipoate-dependent enzymes, thereby converting the octanoylated domains into lipoylated derivatives. The chain is Lipoyl synthase from Sorangium cellulosum (strain So ce56) (Polyangium cellulosum (strain So ce56)).